A 121-amino-acid chain; its full sequence is Large ribosomal subunit protein uL14 (121 aa).

This sequence belongs to the universal ribosomal protein uL14 family. Part of the 50S ribosomal subunit. Forms a cluster with proteins L3 and L19. In the 70S ribosome, L14 and L19 interact and together make contacts with the 16S rRNA in bridges B5 and B8.

Its function is as follows. Binds to 23S rRNA. Forms part of two intersubunit bridges in the 70S ribosome. In Akkermansia muciniphila (strain ATCC BAA-835 / DSM 22959 / JCM 33894 / BCRC 81048 / CCUG 64013 / CIP 107961 / Muc), this protein is Large ribosomal subunit protein uL14.